The primary structure comprises 443 residues: Endothelin receptor type B (443 aa).

Residues 1-26 (MQPLPTLCGRVLVALILACGVAGVQG) form the signal peptide. Residues 27–102 (EERRFPPARA…RTIEIKETFK (76 aa)) lie on the Extracellular side of the membrane. Polar residues predominate over residues 51–62 (TKTSWPTGSNAS). The tract at residues 51–89 (TKTSWPTGSNASVPRLSAPPQMPKAGRTAGAQRRTLPPP) is disordered. Asn60 carries an N-linked (GlcNAc...) asparagine glycan. The chain crosses the membrane as a helical span at residues 103-127 (YINTVVSCLVFVLGIIGNSTLLRII). Topologically, residues 128-138 (YKNKCMRNGPN) are cytoplasmic. Residues 139 to 164 (ILIASLALGDLLHIIIDIPINVYKLL) traverse the membrane as a helical segment. Residues 165 to 176 (AEDWPFGVEMCK) are Extracellular-facing. A disulfide bond links Cys175 and Cys256. A helical transmembrane segment spans residues 177 to 198 (LVPFIQKASVGITVLSLCALSI). At 199-219 (DRYRAVASWSRIKGIGVPKWT) the chain is on the cytoplasmic side. Residues 220 to 244 (AVEIVLIWVVSVVLAVPEAVGFDMI) traverse the membrane as a helical segment. The Extracellular portion of the chain corresponds to 245–272 (TADYKGSYLRICLLHPTQKTAFMQFYKN). The helical transmembrane segment at 273–297 (AKDWWLFSFYFCLPLAITAFFYTLE) threads the bilayer. Topologically, residues 298-325 (TCEMLRKKSGMQIALNDHLKQRREVAKT) are cytoplasmic. Phosphoserine is present on Ser306. A helical membrane pass occupies residues 326-351 (VFCLVLVFALCWLPLHLSRILKHTLY). Topologically, residues 352 to 363 (DQNDPHRCELLS) are extracellular. The helical transmembrane segment at 364–390 (FLLVLEYIGINMASLNSCINPIALYLV) threads the bilayer. Residues 391 to 443 (SKRFKNCFKWCLCCWCQSFEEKQSLEDKQSCLKFKANDHGYDNFRSSNKYSSS) lie on the Cytoplasmic side of the membrane. Residues Cys403, Cys404, and Cys406 are each lipidated (S-palmitoyl cysteine). At Ser420 the chain carries Phosphoserine. Position 440 is a phosphotyrosine (Tyr440). 3 positions are modified to phosphoserine: Ser441, Ser442, and Ser443.

It belongs to the G-protein coupled receptor 1 family. Endothelin receptor subfamily. EDNRB sub-subfamily.

The protein localises to the cell membrane. In terms of biological role, non-specific receptor for endothelin 1, 2, and 3. Mediates its action by association with G proteins that activate a phosphatidylinositol-calcium second messenger system. The polypeptide is Endothelin receptor type B (EDNRB) (Equus caballus (Horse)).